A 220-amino-acid polypeptide reads, in one-letter code: tRNA (guanine-N(7)-)-methyltransferase (220 aa).

S-adenosyl-L-methionine is bound by residues Glu44, Glu69, Asn96, and Asp118. The active site involves Asp118. Lys122 contacts substrate. Residues 124 to 129 (RHEKRR) are interaction with RNA. Substrate contacts are provided by residues Asp154 and 191-194 (TEYE).

Belongs to the class I-like SAM-binding methyltransferase superfamily. TrmB family.

It catalyses the reaction guanosine(46) in tRNA + S-adenosyl-L-methionine = N(7)-methylguanosine(46) in tRNA + S-adenosyl-L-homocysteine. It participates in tRNA modification; N(7)-methylguanine-tRNA biosynthesis. Functionally, catalyzes the formation of N(7)-methylguanine at position 46 (m7G46) in tRNA. The chain is tRNA (guanine-N(7)-)-methyltransferase from Geobacillus sp. (strain WCH70).